The sequence spans 156 residues: DNA gyrase inhibitor (156 aa).

The protein belongs to the DNA gyrase inhibitor family. Interacts with DNA gyrase.

Its subcellular location is the cytoplasm. Functionally, inhibits the supercoiling activity of DNA gyrase. Acts by inhibiting DNA gyrase at an early step, prior to (or at the step of) binding of DNA by the gyrase. It protects cells against toxins that target DNA gyrase, by inhibiting activity of these toxins and reducing the formation of lethal double-strand breaks in the cell. The polypeptide is DNA gyrase inhibitor (Serratia proteamaculans (strain 568)).